The primary structure comprises 372 residues: Integral membrane protein GPR137B (372 aa).

At 1-32 (MESPAWDATKNDSLPPTLTPAVPPYVKLGLTT) the chain is on the lumenal side. Asn11 carries an N-linked (GlcNAc...) asparagine glycan. Residues 33–53 (VYTIFYLLLFAFVYVQLWLVL) form a helical membrane-spanning segment. Topologically, residues 54-64 (HYKHKRFSYQT) are cytoplasmic. The helical transmembrane segment at 65–85 (VFLFLCLLWASLRAVLFSFYF) threads the bilayer. Topologically, residues 86–93 (RNFVEANR) are lumenal. The chain crosses the membrane as a helical span at residues 94–114 (LGAFTFWLLYCFPVCLQFFTL). Over 115–144 (TLMNLYFARVIYKAKSKYLPELIKYRLPLY) the chain is Cytoplasmic. The helical transmembrane segment at 145 to 165 (LAFLVISLLFLVVNLTCAILV) threads the bilayer. At 166-173 (KTDYAETK) the chain is on the lumenal side. Residues 174–194 (VIVSIRVAINDTLFVLCAVSL) traverse the membrane as a helical segment. Residues 195-222 (SVCLYKISKMSLAGVYLESKGSSVCQVT) are Cytoplasmic-facing. The chain crosses the membrane as a helical span at residues 223–243 (CIGVTVILLYTSRACYNLVVL). Residues 244–276 (SLSDSRYSSFDYDWYNVSDQADLKCKLGDAGYV) are Lumenal-facing. Asn259 is a glycosylation site (N-linked (GlcNAc...) asparagine). A helical transmembrane segment spans residues 277-297 (VFGIILFIWELFPTSLVVYFF). The Cytoplasmic segment spans residues 298-372 (RVRNSAQDMT…QTGSLQRDST (75 aa)).

Belongs to the GPR137 family.

Its subcellular location is the lysosome membrane. Lysosomal integral membrane protein that regulates the localization and activity of mTORC1, a signaling complex promoting cell growth in response to growth factors, energy levels, and amino acids. Interacts with Rag GTPases and increases the lysosomial localization and activity of Rag GTPases and thereby regulates mTORC1 translocation and activity in lysosome. Involved in the regulation of lysosomal morphology and autophagy. Also acts as a negative regulator of osteoclast activity. Functionally, also acts as a negative regulator of osteoclast activity. The sequence is that of Integral membrane protein GPR137B (gpr137b) from Xenopus laevis (African clawed frog).